Consider the following 661-residue polypeptide: Arginine--tRNA ligase, cytoplasmic (661 aa).

Residues 1–72 are could be involved in the assembly of the multisynthetase complex; the sequence is MEARVAEAAA…QEEQSKTVKS (72 aa). L-arginine contacts are provided by residues 201 to 203, H212, Y385, D389, and Q413; that span reads SPN. The 'HIGH' region signature appears at 202 to 213; the sequence is PNIAKEMHVGHL. The interval 530 to 544 is interaction with tRNA; the sequence is NTAAYLLYAFTRIRA.

Belongs to the class-I aminoacyl-tRNA synthetase family. As to quaternary structure, monomer; also part of a multisubunit complex that groups tRNA ligases for Arg, Asp, Glu, Gln, Ile, Leu, Lys, Met and Pro.

The protein localises to the cytoplasm. The protein resides in the cytosol. It catalyses the reaction tRNA(Arg) + L-arginine + ATP = L-arginyl-tRNA(Arg) + AMP + diphosphate. Forms part of a macromolecular complex that catalyzes the attachment of specific amino acids to cognate tRNAs during protein synthesis. This Gallus gallus (Chicken) protein is Arginine--tRNA ligase, cytoplasmic (RARS1).